The sequence spans 397 residues: Phosphoglycerate kinase (397 aa).

Substrate contacts are provided by residues 21 to 23 (DFN), R37, 60 to 63 (HLGR), R119, and R152. Residues K203, G294, E325, and 354 to 357 (GGDS) contribute to the ATP site.

It belongs to the phosphoglycerate kinase family. In terms of assembly, monomer.

It localises to the cytoplasm. It carries out the reaction (2R)-3-phosphoglycerate + ATP = (2R)-3-phospho-glyceroyl phosphate + ADP. It participates in carbohydrate degradation; glycolysis; pyruvate from D-glyceraldehyde 3-phosphate: step 2/5. The chain is Phosphoglycerate kinase from Chlorobium phaeobacteroides (strain DSM 266 / SMG 266 / 2430).